The sequence spans 146 residues: Snaclec alboaggregin-B subunit beta (146 aa).

The signal sequence occupies residues 1 to 23 (MGRFIFGSFGLLVLFLSLSGTGA). Positions 24–143 (DCPSDWSSYD…CSRTYPFVCK (120 aa)) constitute a C-type lectin domain. Disulfide bonds link cysteine 25-cysteine 36, cysteine 53-cysteine 142, and cysteine 119-cysteine 134.

It belongs to the snaclec family. In terms of assembly, heterodimer of subunits alpha and beta; disulfide-linked. In terms of tissue distribution, expressed by the venom gland.

It is found in the secreted. Its function is as follows. Weakly agglutinates platelets at high doses by binding to GPIbalpha (GP1BA). This Trimeresurus albolabris (White-lipped pit viper) protein is Snaclec alboaggregin-B subunit beta.